A 138-amino-acid chain; its full sequence is Thyrotropin subunit beta (138 aa).

Positions 1–20 are cleaved as a signal peptide; it reads MTAIYLMSMLFGLACGQAMS. Intrachain disulfides connect cysteine 22–cysteine 72, cysteine 36–cysteine 87, cysteine 39–cysteine 125, cysteine 47–cysteine 103, cysteine 51–cysteine 105, and cysteine 108–cysteine 115. A glycan (N-linked (GlcNAc...) asparagine) is linked at asparagine 43. Residues 133 to 138 constitute a propeptide that is removed on maturation; sequence VVGFSI.

The protein belongs to the glycoprotein hormones subunit beta family. Heterodimer of a common alpha chain and a unique beta chain which confers biological specificity to thyrotropin, lutropin, follitropin and gonadotropin.

The protein resides in the secreted. Indispensable for the control of thyroid structure and metabolism. The sequence is that of Thyrotropin subunit beta (TSHB) from Canis lupus familiaris (Dog).